Consider the following 118-residue polypeptide: Large ribosomal subunit protein uL18 (118 aa).

The interval 1–25 is disordered; sequence MITKPDKNKVRQKRHRRVRGKLSGT. Basic residues predominate over residues 10–20; sequence VRQKRHRRVRG.

Belongs to the universal ribosomal protein uL18 family. Part of the 50S ribosomal subunit; part of the 5S rRNA/L5/L18/L25 subcomplex. Contacts the 5S and 23S rRNAs.

Its function is as follows. This is one of the proteins that bind and probably mediate the attachment of the 5S RNA into the large ribosomal subunit, where it forms part of the central protuberance. This Streptococcus gordonii (strain Challis / ATCC 35105 / BCRC 15272 / CH1 / DL1 / V288) protein is Large ribosomal subunit protein uL18.